The chain runs to 242 residues: Myb-related protein MYBAS2 (242 aa).

2 consecutive HTH myb-type domains span residues 5–61 (REEI…HPGL) and 62–112 (KRGR…RKKA). Residues 33–57 (WDFIAKVSGLNRTGKSCRLRWVNYL) constitute a DNA-binding region (H-T-H motif). Residues 62–65 (KRGR) carry the Bipartite nuclear localization signal 1 motif. A DNA-binding region (H-T-H motif) is located at residues 85–108 (WSRIARRLPGRTDNEIKNYWRTHM). The Bipartite nuclear localization signal 2 signature appears at 109–117 (RKKAQERKS). The segment at 110–133 (KKAQERKSNMSPSSSSSSLTYQSC) is disordered. The span at 118–133 (NMSPSSSSSSLTYQSC) shows a compositional bias: low complexity.

It localises to the nucleus. Transcription factor. This Oryza sativa subsp. japonica (Rice) protein is Myb-related protein MYBAS2 (MYBAS2).